A 224-amino-acid polypeptide reads, in one-letter code: Germin-like protein 8-8 (224 aa).

The signal sequence occupies residues 1–22 (MASPSFCLLAALLALVSWQAIA). The cysteines at positions 32 and 47 are disulfide-linked. The region spanning 62–212 (AMLDTPRKTN…AFQVEKGTID (151 aa)) is the Cupin type-1 domain. The N-linked (GlcNAc...) asparagine glycan is linked to Asn-76. Residues His-109, His-111, and Glu-116 each coordinate Mn(2+). Asn-135 carries an N-linked (GlcNAc...) asparagine glycan. His-157 is a binding site for Mn(2+).

It belongs to the germin family. Oligomer (believed to be a pentamer but probably hexamer).

It is found in the secreted. It localises to the extracellular space. Its subcellular location is the apoplast. Its function is as follows. Plays a role in broad-spectrum disease resistance. Probably has no oxalate oxidase activity even if the active site is conserved. The polypeptide is Germin-like protein 8-8 (Oryza sativa subsp. japonica (Rice)).